Reading from the N-terminus, the 409-residue chain is F-box/kelch-repeat protein At1g48625 (409 aa).

The 48-residue stretch at 2–49 (ATMISNLPRDLMEEILSRVPLKSMRAVRLTCKNWHTLSITISESLAKM) folds into the F-box domain. Kelch repeat units follow at residues 169–218 (FIDY…LKGN) and 221–266 (WCAR…ILSC).

In Arabidopsis thaliana (Mouse-ear cress), this protein is F-box/kelch-repeat protein At1g48625.